The following is a 335-amino-acid chain: D-alanine--D-alanine ligase (335 aa).

An ATP-grasp domain is found at 124–330 (KMWFSALGVP…FTEYLSDVIS (207 aa)). Residue 154–209 (AFDTWGSVFIKAASQGSSVGCYKVDVRDNIAKVLEEAFGYAPYVVVEKTIKARELE) coordinates ATP. Mg(2+) is bound by residues D284, E297, and N299.

Belongs to the D-alanine--D-alanine ligase family. Requires Mg(2+) as cofactor. The cofactor is Mn(2+).

It localises to the cytoplasm. It catalyses the reaction 2 D-alanine + ATP = D-alanyl-D-alanine + ADP + phosphate + H(+). It participates in cell wall biogenesis; peptidoglycan biosynthesis. Cell wall formation. This chain is D-alanine--D-alanine ligase, found in Shewanella denitrificans (strain OS217 / ATCC BAA-1090 / DSM 15013).